The primary structure comprises 438 residues: sn-glycerol-3-phosphate-binding periplasmic protein UgpB (438 aa).

The signal sequence occupies residues 1-23; that stretch reads MKPLRYTASALALGLALMANAQA. 7 residues coordinate sn-glycerol 3-phosphate: Tyr-65, Glu-89, Ser-144, Ser-270, Gly-307, Tyr-346, and Arg-397.

The protein belongs to the bacterial solute-binding protein 1 family. The complex is composed of two ATP-binding proteins (UgpC), two transmembrane proteins (UgpA and UgpE) and a solute-binding protein (UgpB).

Its subcellular location is the periplasm. Its function is as follows. Part of the ABC transporter complex UgpBAEC involved in sn-glycerol-3-phosphate (G3P) import. Binds G3P. This chain is sn-glycerol-3-phosphate-binding periplasmic protein UgpB (ugpB), found in Escherichia coli O6:K15:H31 (strain 536 / UPEC).